A 511-amino-acid polypeptide reads, in one-letter code: Bifunctional purine biosynthesis protein PurH (511 aa).

The MGS-like domain maps to 1 to 145 (MKKRALVSVS…KNHKFVSVIV (145 aa)).

The protein belongs to the PurH family.

The catalysed reaction is (6R)-10-formyltetrahydrofolate + 5-amino-1-(5-phospho-beta-D-ribosyl)imidazole-4-carboxamide = 5-formamido-1-(5-phospho-D-ribosyl)imidazole-4-carboxamide + (6S)-5,6,7,8-tetrahydrofolate. It carries out the reaction IMP + H2O = 5-formamido-1-(5-phospho-D-ribosyl)imidazole-4-carboxamide. It functions in the pathway purine metabolism; IMP biosynthesis via de novo pathway; 5-formamido-1-(5-phospho-D-ribosyl)imidazole-4-carboxamide from 5-amino-1-(5-phospho-D-ribosyl)imidazole-4-carboxamide (10-formyl THF route): step 1/1. Its pathway is purine metabolism; IMP biosynthesis via de novo pathway; IMP from 5-formamido-1-(5-phospho-D-ribosyl)imidazole-4-carboxamide: step 1/1. The protein is Bifunctional purine biosynthesis protein PurH of Bacillus cereus (strain B4264).